A 205-amino-acid chain; its full sequence is MTAETPVKDENIVWHQHTVDKQFRAELKKQKPAVLWFTGLSGAGKSTVAGALENRLAELGYHTYLLDGDNVRHGLCSDLGFSEQDRRENIRRIGELAKLMADAGLIVLSAFISPHRAERQLVRDLLPEGEFIEVFVNASLEVCEGRDPKGLYKKARAGEIPNFTGIDSEYQAPINPEIDLPAGEKSVEELVELCLNELKQRRVIS.

39 to 46 is a binding site for ATP; sequence GLSGAGKS. Residue Ser-113 is the Phosphoserine intermediate of the active site.

It belongs to the APS kinase family.

The catalysed reaction is adenosine 5'-phosphosulfate + ATP = 3'-phosphoadenylyl sulfate + ADP + H(+). It functions in the pathway sulfur metabolism; hydrogen sulfide biosynthesis; sulfite from sulfate: step 2/3. In terms of biological role, catalyzes the synthesis of activated sulfate. This Vibrio parahaemolyticus serotype O3:K6 (strain RIMD 2210633) protein is Adenylyl-sulfate kinase.